A 328-amino-acid polypeptide reads, in one-letter code: Malate dehydrogenase (328 aa).

NAD(+) is bound at residue 12-18; that stretch reads GAAGQIG. Positions 93 and 99 each coordinate substrate. Residues asparagine 106, glutamine 113, and 130-132 contribute to the NAD(+) site; that span reads VGN. Asparagine 132 and arginine 163 together coordinate substrate. Histidine 188 (proton acceptor) is an active-site residue.

The protein belongs to the LDH/MDH superfamily. MDH type 2 family.

The catalysed reaction is (S)-malate + NAD(+) = oxaloacetate + NADH + H(+). Catalyzes the reversible oxidation of malate to oxaloacetate. The chain is Malate dehydrogenase from Saccharopolyspora erythraea (strain ATCC 11635 / DSM 40517 / JCM 4748 / NBRC 13426 / NCIMB 8594 / NRRL 2338).